We begin with the raw amino-acid sequence, 642 residues long: Bifunctional protein glk (642 aa).

Residues 1-340 (MSTGAQSKAV…QLSNRSGGAS (340 aa)) are glucokinase. 23 to 28 (ADVGGT) contributes to the ATP binding site. The HTH rpiR-type domain occupies 341 to 417 (SAVFERIRQM…LKLATGLTGT (77 aa)). Positions 341–642 (SAVFERIRQM…SPAAKDVARD (302 aa)) are putative HTH-type transcriptional regulator. Positions 377 to 396 (IVDIARKADVSQPTVIRFCR) form a DNA-binding region, H-T-H motif. The SIS domain occupies 461-600 (AIEILNGARR…AVGVAIRRAS (140 aa)). The helical transmembrane segment at 576–596 (SMISRILHLLMIDILAVGVAI) threads the bilayer.

This sequence in the N-terminal section; belongs to the bacterial glucokinase family.

Its subcellular location is the membrane. It catalyses the reaction D-glucose + ATP = D-glucose 6-phosphate + ADP + H(+). The protein is Bifunctional protein glk (glk) of Burkholderia orbicola (strain AU 1054).